A 249-amino-acid chain; its full sequence is Metallo-beta-lactamase type 2 (249 aa).

Positions 1 to 22 are cleaved as a signal peptide; it reads MLKKIKISLILALGLTSLQAFG. Zn(2+) contacts are provided by His98, His100, Asp102, His161, and Cys180. Lys183 contacts substrate. Position 222 (His222) interacts with Zn(2+).

The protein belongs to the metallo-beta-lactamase superfamily. Class-B beta-lactamase family. Monomer. Zn(2+) serves as cofactor.

Its subcellular location is the periplasm. The catalysed reaction is a beta-lactam + H2O = a substituted beta-amino acid. In terms of biological role, confers resistance to the different beta-lactams antibiotics (penicillin, cephalosporin and carbapenem) via the hydrolysis of the beta-lactam ring. This Elizabethkingia meningoseptica (Chryseobacterium meningosepticum) protein is Metallo-beta-lactamase type 2 (blaB2).